The sequence spans 178 residues: Large ribosomal subunit protein uL10 (178 aa).

The protein belongs to the universal ribosomal protein uL10 family. As to quaternary structure, part of the ribosomal stalk of the 50S ribosomal subunit. The N-terminus interacts with L11 and the large rRNA to form the base of the stalk. The C-terminus forms an elongated spine to which L12 dimers bind in a sequential fashion forming a multimeric L10(L12)X complex.

Functionally, forms part of the ribosomal stalk, playing a central role in the interaction of the ribosome with GTP-bound translation factors. This chain is Large ribosomal subunit protein uL10, found in Thermosynechococcus vestitus (strain NIES-2133 / IAM M-273 / BP-1).